Here is a 312-residue protein sequence, read N- to C-terminus: tRNA U34 carboxymethyltransferase (312 aa).

Carboxy-S-adenosyl-L-methionine-binding positions include lysine 88, tryptophan 102, lysine 107, glycine 127, 149–151 (DPS), 177–178 (LD), methionine 191, tyrosine 195, and arginine 304.

The protein belongs to the class I-like SAM-binding methyltransferase superfamily. CmoB family. As to quaternary structure, homotetramer.

The catalysed reaction is carboxy-S-adenosyl-L-methionine + 5-hydroxyuridine(34) in tRNA = 5-carboxymethoxyuridine(34) in tRNA + S-adenosyl-L-homocysteine + H(+). In terms of biological role, catalyzes carboxymethyl transfer from carboxy-S-adenosyl-L-methionine (Cx-SAM) to 5-hydroxyuridine (ho5U) to form 5-carboxymethoxyuridine (cmo5U) at position 34 in tRNAs. The protein is tRNA U34 carboxymethyltransferase of Dichelobacter nodosus (strain VCS1703A).